The following is a 270-amino-acid chain: Co-chaperone protein DjlA (270 aa).

At 1–6 (MQYWGK) the chain is on the periplasmic side. Residues 7-31 (IIGVAVALMMGGGFWGVVLGLLVGH) traverse the membrane as a helical segment. At 32–270 (MFDKARSRKM…ELIKEQKGFK (239 aa)) the chain is on the cytoplasmic side. The region spanning 204 to 270 (DACNVLGVKT…ELIKEQKGFK (67 aa)) is the J domain.

As to quaternary structure, homodimer.

Its subcellular location is the cell inner membrane. Regulatory DnaK co-chaperone. Direct interaction between DnaK and DjlA is needed for the induction of the wcaABCDE operon, involved in the synthesis of a colanic acid polysaccharide capsule, possibly through activation of the RcsB/RcsC phosphotransfer signaling pathway. The colanic acid capsule may help the bacterium survive conditions outside the host. This is Co-chaperone protein DjlA from Salmonella paratyphi A (strain ATCC 9150 / SARB42).